The following is an 886-amino-acid chain: Vam6/Vps39-like protein (886 aa).

The 280-residue stretch at 15–294 (PLQIDCLAAW…RFITSGGSNI (280 aa)) folds into the CNH domain. Residues 573 to 750 (FTEDLPEVES…LLRMYLSPPS (178 aa)) form a CHCR repeat.

Belongs to the VAM6/VPS39 family. In terms of assembly, homooligomer. Interacts with TGFBR2 and, less efficiently, with TGFBR1; interaction with TGFBR2 is independent of the receptor kinase activity and of the presence of TGF-beta. Also interacts with ACVR2B, but not with BMPR2. Interacts with SMAD4, preferentially following TGF-beta treatment. Does not interact with SAMD2 or SMAD3. Component of the homotypic fusion and vacuole protein sorting (HOPS) complex; the core of which composed of the class C Vps proteins VPS11, VPS16, VPS18 and VPS33A, is associated with VPS39 and VPS41. Interacts with PLEKHM2; involved in VPS39 recruitment to ARL8B-containing lysosomes. Associates with adapter protein complex 3 (AP-3) and clathrin:AP-3 complexes. Interacts with STX17; this interaction is increased in the absence of TMEM39A. Interacts with RAB7, RAB2A and RAB2B. Interacts with RAB2A (GTP-bound); the interaction contributes to obtaining a functional HOPS complex that promotes autophagosome-lysosome membrane fusion driven by STX17-SNAP29-VAMP8. Interacts with RAB39A (GTP-bound) and RAB39B (GTP-bound); interaction with RAB39A contributes to obtaining a functional HOPS complex. (Microbial infection) Interacts with SARS coronavirus-2/SARS-CoV-2 ORF3A protein; the interaction is direct and sequestrates VPS39, thereby preventing HOPS complex from interacting with the autophagosomal SNARE protein STX17. ORF3A enhances the interaction of VPS39 with VPS11 and VPS18, while its interaction with the VPS16:VPS33A module is attenuated. In terms of tissue distribution, widely expressed, with highest levels in heart, skeletal muscle, kidney, pancreas, brain, placenta and spleen.

Its subcellular location is the cytoplasm. The protein localises to the lysosome membrane. It is found in the late endosome membrane. Functionally, regulator of TGF-beta/activin signaling, inhibiting SMAD3- and activating SMAD2-dependent transcription. Acts by interfering with SMAD3/SMAD4 complex formation, this would lead to inhibition of SMAD3-dependent transcription and relieve SMAD3 inhibition of SMAD2-dependent promoters, thus increasing SMAD2-dependent transcription. Does not affect TGF-beta-induced SMAD2 or SMAD3 phosphorylation, nor SMAD2/SMAD4 complex formation. Plays a role in vesicle-mediated protein trafficking to lysosomal compartments including the endocytic membrane transport and autophagic pathways. Acts as a component of the HOPS endosomal tethering complex. This complex is proposed to be involved in the Rab5-to-Rab7 endosome conversion probably implicating MON1A/B, and via binding SNAREs and SNARE complexes to mediate tethering and docking events during SNARE-mediated membrane fusion. The HOPS complex is proposed to be recruited to Rab7 on the late endosomal membrane and to regulate late endocytic, phagocytic and autophagic traffic towards lysosomes. Involved in homotypic vesicle fusions between late endosomes and in heterotypic fusions between late endosomes and lysosomes. Required for fusion of endosomes and autophagosomes with lysosomes. The sequence is that of Vam6/Vps39-like protein from Homo sapiens (Human).